The chain runs to 1096 residues: Inactive phospholipase C-like protein 1 (1096 aa).

The interval 1–101 (MAEGAASREA…KKTVSFSSMP (101 aa)) is disordered. Residues 26–41 (GADAASGDAAPEASGG) are compositionally biased toward low complexity. Phosphoserine is present on residues Ser48 and Ser78. Positions 83–222 (PSNQKCGGRK…NIWVSGLRYL (140 aa)) are interaction with PPP1C. Thr94 carries the phosphothreonine modification. Residue Ser96 is modified to Phosphoserine. A PH domain is found at 114–224 (SFMQAGCELK…WVSGLRYLVS (111 aa)). The PI-PLC X-box domain maps to 399–543 (QDMTQPLSHY…LKHMIIVKGK (145 aa)). The segment at 544–568 (KLPSESDLLEGEVTDEDEEAEMSRR) is interaction with GABA A beta subunit. Thr557 carries the post-translational modification Phosphothreonine. Ser570 is subject to Phosphoserine. The region spanning 586 to 702 (LSDLVSICKS…GYVLRPSIMR (117 aa)) is the PI-PLC Y-box domain. The C2 domain occupies 702–831 (RDEVSYFSAN…PGYRHVPLRS (130 aa)). A coiled-coil region spans residues 1040–1060 (DLLKNAKNEAVENIKQIQLAC). The segment at 1067–1096 (KGPGSAAEAKGKRSLEAIEEKESSEENGKL) is disordered. The span at 1075 to 1096 (AKGKRSLEAIEEKESSEENGKL) shows a compositional bias: basic and acidic residues. The residue at position 1080 (Ser1080) is a Phosphoserine.

It belongs to the PRIP family. As to quaternary structure, interacts with PPP2CA, GABA receptor beta subunits, GABA receptor gamma-2 subunits. Interacts with Ins(1,4,5)P3, Ins(1,4,5,6)P4, GABARAP, and PPP1C. May form a ternary complex with GABA receptor beta subunit and GABARAP. The formation of a ternary complex with GABA receptor beta subunit and GABARAP could be the key step for facilitating the association of GABARAP with the GABA receptor gamma-2 subunit and to allow it to be transported at the right destination. In terms of processing, phosphorylation of Thr-94 resulted in dissociation of PPP1C from PRIP1. In vitro, phosphorylated by the catalytic subunit of PKA. Expressed in brain. Found in the granular cell and Purkinje cell layers in the cerebellum; and in the hippocampal pyramidal cells, dentate granule cells and pyramidal granule cells of the cerebral cortex in the cerebrum.

Its subcellular location is the cytoplasm. Involved in an inositol phospholipid-based intracellular signaling cascade. Shows no PLC activity to phosphatidylinositol 4,5-bisphosphate and phosphatidylinositol. Component in the phospho-dependent endocytosis process of GABA A receptor. Acts as an inhibitor of PPP1C. This Rattus norvegicus (Rat) protein is Inactive phospholipase C-like protein 1 (Plcl1).